A 379-amino-acid chain; its full sequence is Chaperone protein DnaJ (379 aa).

In terms of domain architecture, J spans 5–70 (DYYEVLGVEK…QKRAAYDQYG (66 aa)). A CR-type zinc finger spans residues 133-211 (GKSVEIRVPT…CHGQGRVEKT (79 aa)). 8 residues coordinate Zn(2+): cysteine 146, cysteine 149, cysteine 163, cysteine 166, cysteine 185, cysteine 188, cysteine 199, and cysteine 202. 4 CXXCXGXG motif repeats span residues 146–153 (CDTCDGSG), 163–170 (CTTCHGQG), 185–192 (CPTCGGKG), and 199–206 (CDVCHGQG).

This sequence belongs to the DnaJ family. Homodimer. Zn(2+) is required as a cofactor.

It localises to the cytoplasm. Participates actively in the response to hyperosmotic and heat shock by preventing the aggregation of stress-denatured proteins and by disaggregating proteins, also in an autonomous, DnaK-independent fashion. Unfolded proteins bind initially to DnaJ; upon interaction with the DnaJ-bound protein, DnaK hydrolyzes its bound ATP, resulting in the formation of a stable complex. GrpE releases ADP from DnaK; ATP binding to DnaK triggers the release of the substrate protein, thus completing the reaction cycle. Several rounds of ATP-dependent interactions between DnaJ, DnaK and GrpE are required for fully efficient folding. Also involved, together with DnaK and GrpE, in the DNA replication of plasmids through activation of initiation proteins. The polypeptide is Chaperone protein DnaJ (Pseudoalteromonas atlantica (strain T6c / ATCC BAA-1087)).